We begin with the raw amino-acid sequence, 183 residues long: Large ribosomal subunit protein uL6 (183 aa).

It belongs to the universal ribosomal protein uL6 family. As to quaternary structure, part of the 50S ribosomal subunit.

In terms of biological role, this protein binds to the 23S rRNA, and is important in its secondary structure. It is located near the subunit interface in the base of the L7/L12 stalk, and near the tRNA binding site of the peptidyltransferase center. This chain is Large ribosomal subunit protein uL6, found in Moorella thermoacetica (strain ATCC 39073 / JCM 9320).